A 147-amino-acid chain; its full sequence is Ras-related protein RabK2 (147 aa).

Residues 11–15 and 63–66 each bind GTP; these read NTHGS and TKSD. Cys-145 carries the S-geranylgeranyl cysteine lipid modification.

The protein belongs to the small GTPase superfamily. Rab family.

The protein localises to the cell membrane. This is Ras-related protein RabK2 (rabK2) from Dictyostelium discoideum (Social amoeba).